Reading from the N-terminus, the 361-residue chain is RNA 3'-terminal phosphate cyclase (361 aa).

ATP contacts are provided by residues Gln-109 and 293-297; that span reads HLADQ. Residue His-319 is the Tele-AMP-histidine intermediate of the active site.

The protein belongs to the RNA 3'-terminal cyclase family. Type 1 subfamily.

Its subcellular location is the cytoplasm. The catalysed reaction is a 3'-end 3'-phospho-ribonucleotide-RNA + ATP = a 3'-end 2',3'-cyclophospho-ribonucleotide-RNA + AMP + diphosphate. In terms of biological role, catalyzes the conversion of 3'-phosphate to a 2',3'-cyclic phosphodiester at the end of RNA. The mechanism of action of the enzyme occurs in 3 steps: (A) adenylation of the enzyme by ATP; (B) transfer of adenylate to an RNA-N3'P to produce RNA-N3'PP5'A; (C) and attack of the adjacent 2'-hydroxyl on the 3'-phosphorus in the diester linkage to produce the cyclic end product. The biological role of this enzyme is unknown but it is likely to function in some aspects of cellular RNA processing. This Methylococcus capsulatus (strain ATCC 33009 / NCIMB 11132 / Bath) protein is RNA 3'-terminal phosphate cyclase.